Consider the following 197-residue polypeptide: Dephospho-CoA kinase (197 aa).

Residues 2–197 form the DPCK domain; sequence RIGLTGGIAS…YDALAKTAHE (196 aa). Residue 10 to 15 coordinates ATP; that stretch reads ASGKSL.

The protein belongs to the CoaE family.

The protein resides in the cytoplasm. The enzyme catalyses 3'-dephospho-CoA + ATP = ADP + CoA + H(+). Its pathway is cofactor biosynthesis; coenzyme A biosynthesis; CoA from (R)-pantothenate: step 5/5. In terms of biological role, catalyzes the phosphorylation of the 3'-hydroxyl group of dephosphocoenzyme A to form coenzyme A. The polypeptide is Dephospho-CoA kinase (Shouchella clausii (strain KSM-K16) (Alkalihalobacillus clausii)).